The primary structure comprises 187 residues: MKQILDFIPLIIFFALYKMYDIYVATGALIVATAVQLIVTYALYKKVEKMQLITFVIVTIFGSMTIFFHDDNFIKWKVTIIYVVLAVGLTASHLMGKSVVKGMLGKEITLPDAIWAKINWAWVGFFSFFAGLNIYIAYELPLDVWVNFKVFGMLIATFAYMIATGVYIYKHMPKEEKNNSSDVSVDD.

5 helical membrane passes run 22 to 42 (IYVA…VTYA), 50 to 70 (MQLI…FFHD), 80 to 100 (IIYV…KSVV), 118 to 138 (INWA…YIAY), and 148 to 168 (FKVF…GVYI).

It belongs to the YciB family.

The protein resides in the cell inner membrane. In terms of biological role, plays a role in cell envelope biogenesis, maintenance of cell envelope integrity and membrane homeostasis. In Vibrio parahaemolyticus serotype O3:K6 (strain RIMD 2210633), this protein is Inner membrane-spanning protein YciB.